A 454-amino-acid polypeptide reads, in one-letter code: Kynurenine--oxoglutarate transaminase 3 (454 aa).

The residue at position 2 (F2) is an N-acetylserine. Substrate is bound at residue G71. The residue at position 116 (K116) is an N6-acetyllysine; alternate. Position 116 is an N6-succinyllysine; alternate (K116). N218 contributes to the substrate binding site. Position 280 is an N6-(pyridoxal phosphate)lysine (K280). R429 is a substrate binding site.

This sequence belongs to the class-I pyridoxal-phosphate-dependent aminotransferase family. In terms of assembly, homodimer. Requires pyridoxal 5'-phosphate as cofactor.

It catalyses the reaction L-kynurenine + 2-oxoglutarate = kynurenate + L-glutamate + H2O. It carries out the reaction L-kynurenine + glyoxylate = kynurenate + glycine + H2O. The enzyme catalyses 3-hydroxy-L-kynurenine + glyoxylate = xanthurenate + glycine + H2O. The catalysed reaction is an S-substituted L-cysteine + H2O = a thiol + pyruvate + NH4(+). The protein operates within amino-acid degradation; L-kynurenine degradation; kynurenate from L-kynurenine: step 1/2. Functionally, catalyzes the irreversible transamination of the L-tryptophan metabolite L-kynurenine to form kynurenic acid (KA), an intermediate in the tryptophan catabolic pathway which is also a broad spectrum antagonist of the three ionotropic excitatory amino acid receptors among others. May catalyze the beta-elimination of S-conjugates and Se-conjugates of L-(seleno)cysteine, resulting in the cleavage of the C-S or C-Se bond. Has transaminase activity towards L-kynurenine, tryptophan, phenylalanine, serine, cysteine, methionine, histidine, glutamine and asparagine with glyoxylate as an amino group acceptor (in vitro). Has lower activity with 2-oxoglutarate as amino group acceptor (in vitro). In Homo sapiens (Human), this protein is Kynurenine--oxoglutarate transaminase 3.